We begin with the raw amino-acid sequence, 391 residues long: DNA polymerase IV (391 aa).

One can recognise a UmuC domain in the interval 6-187; that stretch reads IIHVDMDAFF…LPVEMLWGVG (182 aa). Mg(2+) is bound by residues Asp10 and Asp105. Residue Glu106 is part of the active site.

Belongs to the DNA polymerase type-Y family. In terms of assembly, monomer. It depends on Mg(2+) as a cofactor.

Its subcellular location is the cytoplasm. The enzyme catalyses DNA(n) + a 2'-deoxyribonucleoside 5'-triphosphate = DNA(n+1) + diphosphate. Functionally, poorly processive, error-prone DNA polymerase involved in untargeted mutagenesis. Copies undamaged DNA at stalled replication forks, which arise in vivo from mismatched or misaligned primer ends. These misaligned primers can be extended by PolIV. Exhibits no 3'-5' exonuclease (proofreading) activity. May be involved in translesional synthesis, in conjunction with the beta clamp from PolIII. This Carboxydothermus hydrogenoformans (strain ATCC BAA-161 / DSM 6008 / Z-2901) protein is DNA polymerase IV.